A 345-amino-acid chain; its full sequence is Cytoskeleton protein RodZ (345 aa).

Topologically, residues 1-111 (MNTEASQDQT…LGKKHKKRDG (111 aa)) are cytoplasmic. Residues 19–79 (LRQARESLGL…KLVHLPEDEL (61 aa)) form the HTH cro/C1-type domain. The segment at residues 30 to 49 (QQTVAERLCLKVSTIRDIEE) is a DNA-binding region (H-T-H motif). The chain crosses the membrane as a helical; Signal-anchor for type II membrane protein span at residues 112–132 (WLMSFTWLIVLVVLGLTGAWW). At 133–345 (WQNHQAQQAE…RVARLTVCVE (213 aa)) the chain is on the periplasmic side. Residues 151 to 259 (SAQLSQNGGQ…PLPTADAGVS (109 aa)) are disordered. The segment covering 188–225 (PLTNHSGSAITNSATTSSVPKTTSTEPVDTANTNTTMH) has biased composition (polar residues). A compositionally biased stretch (low complexity) spans 229–241 (AASAAVSPSQVPQ).

This sequence belongs to the RodZ family.

It is found in the cell inner membrane. Functionally, cytoskeletal protein that is involved in cell-shape control through regulation of the length of the long axis. This chain is Cytoskeleton protein RodZ, found in Yersinia pestis bv. Antiqua (strain Antiqua).